Reading from the N-terminus, the 211-residue chain is LexA repressor (211 aa).

A DNA-binding region (H-T-H motif) is located at residues 27–47; that stretch reads QTEIARAFGFKGVRAAQYHLE. Catalysis depends on for autocatalytic cleavage activity residues Ser-131 and Lys-168.

Belongs to the peptidase S24 family. Homodimer.

The enzyme catalyses Hydrolysis of Ala-|-Gly bond in repressor LexA.. Functionally, represses a number of genes involved in the response to DNA damage (SOS response), including recA and lexA. In the presence of single-stranded DNA, RecA interacts with LexA causing an autocatalytic cleavage which disrupts the DNA-binding part of LexA, leading to derepression of the SOS regulon and eventually DNA repair. This is LexA repressor from Stenotrophomonas maltophilia (strain R551-3).